A 287-amino-acid polypeptide reads, in one-letter code: PIH1 domain-containing protein 1 (287 aa).

This sequence belongs to the PIH1 family.

Its subcellular location is the nucleus. Involved in the assembly of C/D box small nucleolar ribonucleoprotein (snoRNP) particles. Recruits the SWI/SNF complex to the core promoter of rRNA genes and enhances pre-rRNA transcription. Mediates interaction of TELO2 with the R2TP complex which is necessary for the stability of MTOR and SMG1. Positively regulates the assembly and activity of the mTORC1 complex. The protein is PIH1 domain-containing protein 1 (pih1d1) of Danio rerio (Zebrafish).